The sequence spans 289 residues: Delta-sarcoglycan (289 aa).

Topologically, residues 1–37 (MPQEQYSHHRSTMPSSEGPHIYKVGIYGWRKRCLYFF) are cytoplasmic. The chain crosses the membrane as a helical; Signal-anchor for type II membrane protein span at residues 38–56 (VLLLMILILVNLAMTIWIL). Residues 57 to 289 (KVMNFTIDGM…TCQINTSVCL (233 aa)) lie on the Extracellular side of the membrane. Asn60 and Asn108 each carry an N-linked (GlcNAc...) asparagine glycan. Cystine bridges form between Cys263–Cys288 and Cys265–Cys281. Asn284 carries an N-linked (GlcNAc...) asparagine glycan.

It belongs to the sarcoglycan beta/delta/gamma/zeta family. As to quaternary structure, interacts with FLNC. Cross-link to form 2 major subcomplexes: one consisting of SGCB, SGCD and SGCG and the other consisting of SGCB and SGCD. The association between SGCB and SGCG is particularly strong while SGCA is loosely associated with the other sarcoglycans. Interacts with DAG1. Disulfide bonds are present. In terms of tissue distribution, most strongly expressed in skeletal and heart muscle. Also detected in proliferating myoblasts.

The protein localises to the cell membrane. It localises to the sarcolemma. Its subcellular location is the cytoplasm. It is found in the cytoskeleton. In terms of biological role, component of the sarcoglycan complex, a subcomplex of the dystrophin-glycoprotein complex which forms a link between the F-actin cytoskeleton and the extracellular matrix. In Mus musculus (Mouse), this protein is Delta-sarcoglycan (Sgcd).